The primary structure comprises 100 residues: NADH-quinone oxidoreductase subunit K (100 aa).

The next 3 membrane-spanning stretches (helical) occupy residues 4 to 24 (LTHGLILAAILFVLGLTGLVI), 28 to 48 (LLFMLIGLEIMINASALAFVV), and 60 to 80 (VMYILAISLAAAEASIGLALL).

It belongs to the complex I subunit 4L family. In terms of assembly, NDH-1 is composed of 13 different subunits. Subunits NuoA, H, J, K, L, M, N constitute the membrane sector of the complex.

The protein resides in the cell inner membrane. It catalyses the reaction a quinone + NADH + 5 H(+)(in) = a quinol + NAD(+) + 4 H(+)(out). In terms of biological role, NDH-1 shuttles electrons from NADH, via FMN and iron-sulfur (Fe-S) centers, to quinones in the respiratory chain. The immediate electron acceptor for the enzyme in this species is believed to be ubiquinone. Couples the redox reaction to proton translocation (for every two electrons transferred, four hydrogen ions are translocated across the cytoplasmic membrane), and thus conserves the redox energy in a proton gradient. The protein is NADH-quinone oxidoreductase subunit K of Salmonella agona (strain SL483).